The chain runs to 468 residues: 3-isopropylmalate dehydratase large subunit (468 aa).

[4Fe-4S] cluster is bound by residues cysteine 347, cysteine 407, and cysteine 410.

It belongs to the aconitase/IPM isomerase family. LeuC type 1 subfamily. As to quaternary structure, heterodimer of LeuC and LeuD. [4Fe-4S] cluster serves as cofactor.

The catalysed reaction is (2R,3S)-3-isopropylmalate = (2S)-2-isopropylmalate. It participates in amino-acid biosynthesis; L-leucine biosynthesis; L-leucine from 3-methyl-2-oxobutanoate: step 2/4. Functionally, catalyzes the isomerization between 2-isopropylmalate and 3-isopropylmalate, via the formation of 2-isopropylmaleate. In Synechococcus elongatus (strain ATCC 33912 / PCC 7942 / FACHB-805) (Anacystis nidulans R2), this protein is 3-isopropylmalate dehydratase large subunit.